A 317-amino-acid chain; its full sequence is Beta-ketoacyl-[acyl-carrier-protein] synthase III (317 aa).

Residues Cys112 and His244 contribute to the active site. Positions 245 to 249 are ACP-binding; the sequence is QANVR. Asn274 is a catalytic residue.

This sequence belongs to the thiolase-like superfamily. FabH family. Homodimer.

The protein localises to the cytoplasm. It carries out the reaction malonyl-[ACP] + acetyl-CoA + H(+) = 3-oxobutanoyl-[ACP] + CO2 + CoA. Its pathway is lipid metabolism; fatty acid biosynthesis. Catalyzes the condensation reaction of fatty acid synthesis by the addition to an acyl acceptor of two carbons from malonyl-ACP. Catalyzes the first condensation reaction which initiates fatty acid synthesis and may therefore play a role in governing the total rate of fatty acid production. Possesses both acetoacetyl-ACP synthase and acetyl transacylase activities. Its substrate specificity determines the biosynthesis of branched-chain and/or straight-chain of fatty acids. In Rickettsia bellii (strain OSU 85-389), this protein is Beta-ketoacyl-[acyl-carrier-protein] synthase III.